A 688-amino-acid chain; its full sequence is Elongation factor G (688 aa).

A tr-type G domain is found at 8–282 (EKTRNIGIMA…AIIDYLPSPM (275 aa)). Residues 17–24 (AHIDAGKT), 81–85 (DTPGH), and 135–138 (NKMD) each bind GTP.

This sequence belongs to the TRAFAC class translation factor GTPase superfamily. Classic translation factor GTPase family. EF-G/EF-2 subfamily.

It is found in the cytoplasm. Its function is as follows. Catalyzes the GTP-dependent ribosomal translocation step during translation elongation. During this step, the ribosome changes from the pre-translocational (PRE) to the post-translocational (POST) state as the newly formed A-site-bound peptidyl-tRNA and P-site-bound deacylated tRNA move to the P and E sites, respectively. Catalyzes the coordinated movement of the two tRNA molecules, the mRNA and conformational changes in the ribosome. This Apple proliferation phytoplasma protein is Elongation factor G (fusA).